The sequence spans 220 residues: MGAFIAKMLLPTISSLVFVPAASVAAKRGFHMEAMVYFFTMFFTAIYHACDGPGLSILCFMKYDILEYFSVYGTAISMWVTLLALGDFDEPKRSSLTMFGVLTAAVRIYQDRLGYGIYSGPIGTAVFMITVKWLQKMKEKKGLYPDKSVYTQQVGPGCCFGALALMLRFYFEEWDYAYVHSFYHVSLAMSFILLLPKKNRYAGTGRNAAKLNCYTLCCCV.

Methionine 1 is a topological domain (extracellular). The chain crosses the membrane as a helical span at residues glycine 2 to alanine 22. At serine 23–tyrosine 37 the chain is on the cytoplasmic side. The helical transmembrane segment at phenylalanine 38–leucine 58 threads the bilayer. At cysteine 59–aspartate 64 the chain is on the extracellular side. A helical membrane pass occupies residues isoleucine 65–leucine 85. At glycine 86 to arginine 93 the chain is on the cytoplasmic side. The chain crosses the membrane as a helical span at residues serine 94–glutamine 110. The Extracellular segment spans residues aspartate 111–arginine 112. The helical transmembrane segment at leucine 113–tryptophan 133 threads the bilayer. Over leucine 134–glutamine 153 the chain is Cytoplasmic. A helical membrane pass occupies residues valine 154 to tryptophan 174. Aspartate 175 is a topological domain (extracellular). The chain crosses the membrane as a helical span at residues tyrosine 176–proline 196. At lysine 197–valine 220 the chain is on the cytoplasmic side.

This sequence belongs to the TMEM8 family.

Its subcellular location is the cell membrane. Its function is as follows. Myoblast-specific protein that mediates myoblast fusion, an essential step for the formation of multi-nucleated muscle fibers. Actively participates in the membrane fusion reaction by mediating the mixing of cell membrane lipids (hemifusion) upstream of mymx. The sequence is that of Protein myomaker from Danio rerio (Zebrafish).